We begin with the raw amino-acid sequence, 381 residues long: 40-kDa huntingtin-associated protein (381 aa).

Residue Ala-2 is modified to N-acetylalanine. The Nuclear localization signal motif lies at 34-36 (KKR). Residues 221 to 265 (QLELLPQPPSGPQPPLSGPQPRPVLGSTLPLPQPPDHAPGSVAPS) form a disordered region. The segment covering 226–242 (PQPPSGPQPPLSGPQPR) has biased composition (pro residues).

As to quaternary structure, interacts with HTT (via C-terminus). Interacts with RAB5A. Found in a complex with F8A1/F8A2/F8A3, HTT and RAB5A; mediates the recruitment of HTT by RAB5A onto early endosomes. In terms of tissue distribution, produced abundantly in a wide variety of cell types.

It is found in the cytoplasm. The protein localises to the nucleus. It localises to the early endosome. Its subcellular location is the nuclear body. Functionally, RAB5A effector molecule that is involved in vesicular trafficking of early endosomes. Mediates the recruitment of HTT by RAB5A onto early endosomes. The HTT-F8A1/F8A2/F8A3-RAB5A complex stimulates early endosomal interaction with actin filaments and inhibits interaction with microtubules, leading to the reduction of endosome motility. This is 40-kDa huntingtin-associated protein (F8a1) from Mus musculus (Mouse).